Here is a 448-residue protein sequence, read N- to C-terminus: MSKKLISIVDVKDYVGQEVTIGAWVANKSGKGKIAFVQLRDGSAFFQGVAFKPNFIEKYGEESGLEKFDVIKRLNQETSVYVTGIVKEDERSKFGYELDITDLEIIGESHEYPITPKEHGTDFLMDNRHLWLRSRKQMAVMQIRNAIIYATYEFFDQNGFIKFDSPILSENAAEDSTELFETDYFGKPAFLSQSGQLYLEAGAMALGRVFDFGPVFRAEKSKTRRHLTEFWMMDAEYSFLSHEESLDLQEAYVKALIQGVLDRAPQALDILERDVEALKRYITEPFKRVSYDDAITLLQEHEADEDTDYEHLEHGDDFGSPHETWISNYFGVPTFVVNYPASFKAFYMKPVPGNPERVLCADLLAPEGYGEIIGGSMREDNYDALVAKMDELGMDKSEYDFYLDLRKYGSVPHGGFGIGIERMVTFVAGTKHIREAIPFPRMLHRIRP.

This sequence belongs to the class-II aminoacyl-tRNA synthetase family. As to quaternary structure, homodimer.

The protein resides in the cytoplasm. The enzyme catalyses tRNA(Asn) + L-asparagine + ATP = L-asparaginyl-tRNA(Asn) + AMP + diphosphate + H(+). The chain is Asparagine--tRNA ligase from Streptococcus pyogenes serotype M2 (strain MGAS10270).